The chain runs to 520 residues: GMP synthase [glutamine-hydrolyzing] (520 aa).

The region spanning 9–202 (TILIIDFGSQ…VHRIVGVKPG (194 aa)) is the Glutamine amidotransferase type-1 domain. Catalysis depends on Cys-86, which acts as the Nucleophile. Residues His-176 and Glu-178 contribute to the active site. A GMPS ATP-PPase domain is found at 203-395 (WTMGAYREQA…LGLPDSFIGR (193 aa)). Position 230-236 (230-236 (SGGVDSS)) interacts with ATP.

As to quaternary structure, homodimer.

It catalyses the reaction XMP + L-glutamine + ATP + H2O = GMP + L-glutamate + AMP + diphosphate + 2 H(+). Its pathway is purine metabolism; GMP biosynthesis; GMP from XMP (L-Gln route): step 1/1. Functionally, catalyzes the synthesis of GMP from XMP. In Brucella abortus (strain S19), this protein is GMP synthase [glutamine-hydrolyzing].